Consider the following 74-residue polypeptide: Large ribosomal subunit protein uL29 (74 aa).

The protein belongs to the universal ribosomal protein uL29 family.

The polypeptide is Large ribosomal subunit protein uL29 (Nostoc sp. (strain PCC 7120 / SAG 25.82 / UTEX 2576)).